The sequence spans 252 residues: Carbohydrate deacetylase (252 aa).

Mg(2+) is bound by residues His59 and His122.

It belongs to the YdjC deacetylase family. Homodimer. Mg(2+) is required as a cofactor.

Functionally, probably catalyzes the deacetylation of acetylated carbohydrates an important step in the degradation of oligosaccharides. This Vibrio vulnificus (strain YJ016) protein is Carbohydrate deacetylase.